We begin with the raw amino-acid sequence, 213 residues long: MSPRVVVTGTDTGIGKTVFSAALVGALDGVYWKPVQAGLDEETDRDTVLRLSGLPAERMLPEAYRLNTPASPHLAAEIDGVTIDPAKLALPQHDRPLVVEGAGGLLTPLTRSVSYIDVIASWHAPVVLCARTTLGTINHSLLSIEALRARDIELLGIAFIGEAHAESENIIAAMGQVRRLGRLPHLASLTTDSLKAAFADAFNIGDFFKDATA.

13–18 lines the ATP pocket; that stretch reads GIGKTV. Residue Thr17 participates in Mg(2+) binding. The active site involves Lys33. Glu100 contacts Mg(2+). Residues 100–103 and 184–186 each bind ATP; these read EGAG and PHL.

The protein belongs to the dethiobiotin synthetase family. In terms of assembly, homodimer. The cofactor is Mg(2+).

The protein localises to the cytoplasm. The catalysed reaction is (7R,8S)-7,8-diammoniononanoate + CO2 + ATP = (4R,5S)-dethiobiotin + ADP + phosphate + 3 H(+). Its pathway is cofactor biosynthesis; biotin biosynthesis; biotin from 7,8-diaminononanoate: step 1/2. Catalyzes a mechanistically unusual reaction, the ATP-dependent insertion of CO2 between the N7 and N8 nitrogen atoms of 7,8-diaminopelargonic acid (DAPA, also called 7,8-diammoniononanoate) to form a ureido ring. This is ATP-dependent dethiobiotin synthetase BioD from Rhodopseudomonas palustris (strain BisA53).